The sequence spans 334 residues: Malate dehydrogenase (334 aa).

An NAD(+)-binding site is contributed by Gly16–Ala22. Substrate is bound by residues Arg97 and Arg103. Residues Asn110, Gln117, and Val134 to Asn136 each bind NAD(+). Substrate contacts are provided by Asn136 and Arg167. The active-site Proton acceptor is the His192.

This sequence belongs to the LDH/MDH superfamily. MDH type 2 family.

The catalysed reaction is (S)-malate + NAD(+) = oxaloacetate + NADH + H(+). In terms of biological role, catalyzes the reversible oxidation of malate to oxaloacetate. The sequence is that of Malate dehydrogenase from Nocardia farcinica (strain IFM 10152).